Consider the following 187-residue polypeptide: Keratin-associated protein 5-8 (187 aa).

9 consecutive repeat copies span residues Cys-28 to Pro-31, Cys-34 to Pro-37, Cys-40 to Pro-43, Cys-109 to Pro-112, Cys-119 to Pro-122, Cys-138 to Pro-141, Cys-148 to Pro-151, Cys-167 to Pro-170, and Cys-177 to Pro-180. The 9 X 4 AA repeats of C-C-X-P stretch occupies residues Cys-28–Pro-180.

Belongs to the KRTAP type 5 family. In terms of tissue distribution, restricted to hair root, not detected in any other tissues. Expressed in cuticle layers of differentiating hair follicles.

Its function is as follows. In the hair cortex, hair keratin intermediate filaments are embedded in an interfilamentous matrix, consisting of hair keratin-associated protein (KRTAP), which are essential for the formation of a rigid and resistant hair shaft through their extensive disulfide bond cross-linking with abundant cysteine residues of hair keratins. The matrix proteins include the high-sulfur and high-glycine-tyrosine keratins. In Homo sapiens (Human), this protein is Keratin-associated protein 5-8 (KRTAP5-8).